A 599-amino-acid chain; its full sequence is Elongation factor 4 (599 aa).

The tr-type G domain maps to 2–184 (KNIRNFSIIA…RLVRDIPPPE (183 aa)). GTP contacts are provided by residues 14–19 (DHGKST) and 131–134 (NKID).

Belongs to the TRAFAC class translation factor GTPase superfamily. Classic translation factor GTPase family. LepA subfamily.

It localises to the cell inner membrane. The catalysed reaction is GTP + H2O = GDP + phosphate + H(+). Functionally, required for accurate and efficient protein synthesis under certain stress conditions. May act as a fidelity factor of the translation reaction, by catalyzing a one-codon backward translocation of tRNAs on improperly translocated ribosomes. Back-translocation proceeds from a post-translocation (POST) complex to a pre-translocation (PRE) complex, thus giving elongation factor G a second chance to translocate the tRNAs correctly. Binds to ribosomes in a GTP-dependent manner. In Shigella dysenteriae serotype 1 (strain Sd197), this protein is Elongation factor 4.